A 305-amino-acid chain; its full sequence is Beta-lactamase (305 aa).

A signal peptide (tat-type signal) is located at residues 1–34 (MGTTGARPSRRAVLTAAAGAAVAGIPLGGSTAFA). S82 functions as the Acyl-ester intermediate in the catalytic mechanism. 250 to 252 (KTG) contacts substrate.

This sequence belongs to the class-A beta-lactamase family. In terms of processing, predicted to be exported by the Tat system. The position of the signal peptide cleavage has not been experimentally proven.

It carries out the reaction a beta-lactam + H2O = a substituted beta-amino acid. The polypeptide is Beta-lactamase (Streptomyces lavendulae).